Here is a 453-residue protein sequence, read N- to C-terminus: Midnolin (453 aa).

Positions 20 to 94 (MNLNIQSTTG…LTLLPSVEAG (75 aa)) constitute a Ubiquitin-like domain. Disordered regions lie at residues 185 to 219 (HLAS…TTSV), 231 to 256 (PCAE…RSRK), 330 to 374 (SQAR…QTEN), and 390 to 434 (QKRL…IDFE). 2 stretches are compositionally biased toward low complexity: residues 188-204 (SCTP…PTAS) and 239-252 (SSRG…SASS). Polar residues predominate over residues 330–362 (SQARNPKATSPQSSEPQQTTHPVGHCQAQTRTC). Basic and acidic residues predominate over residues 365–374 (SGDRLRQTEN). Residues 390–399 (QKRLRRKARR) are compositionally biased toward basic residues. Residues 415 to 428 (RTSSNSSTSSGEGS) show a composition bias toward low complexity.

Its subcellular location is the nucleus. The protein localises to the cytoplasm. The protein resides in the cytosol. It localises to the nucleolus. In terms of biological role, facilitates ubiquitin-independent proteasomal degradation of polycomb protein CBX4. Plays a role in inhibiting the activity of glucokinase GCK and both glucose-induced and basal insulin secretion. The protein is Midnolin (midn) of Xenopus tropicalis (Western clawed frog).